The chain runs to 552 residues: SQIRHYKWEVEYMFWAPNCNENIVMGINGQFPGPTIRANAGDSVVVELTNKLHTEGVVIHWHGILQRGTPWADGTASISQCAINPGETFFYNFTVDNPGTFFYHGHLGMQRSAGLYGSLIVDPPQGKKEPFHYDGEINLLLSDWWHQSIHKQEVGLSSKPIRWIGEPQTILLNGRGQFDCSIAAKYDSNLEPCKLKGSESCAPYIFHVSPKKTYRIRIASTTALAALNFAIGNHQLLVVEADGNYVQPFYTSDIDIYSGESYSVLITTDQNPSENYWVSVGTRARHPNTPPGLTLLNYLPNSVSKLPTSPPPQTPAWDDFDRSKNFTYRITAAMGSPKPPVKFNRRIFLLNTQNVINGYVKWAINDVSLALPPTPYLGAMKYNLLHAFDQNPPPEVFPEDYDIDTPPTNEKTRIGNGVYQFKIGEVVDVILQNANMMKENLSETHPWHLHGHDFWVLGYGDGKFSAEEESSLNLKNPPLRNTVVIFPYGWTAIRFVADNPGVWAFHCHIEPHLHMGMGVVFAEGVEKVGRIPTKALACGGTAKSLINNPKNP.

2 Plastocyanin-like domains span residues 1 to 122 (SQIR…LIVD) and 134 to 300 (DGEI…NYLP). Disulfide bonds link cysteine 19-cysteine 201, cysteine 81-cysteine 538, and cysteine 180-cysteine 193. Histidine 60 and histidine 62 together coordinate Cu cation. N-linked (GlcNAc...) asparagine glycosylation occurs at asparagine 92. 2 residues coordinate Cu cation: histidine 104 and histidine 106. Residues asparagine 325 and asparagine 440 are each glycosylated (N-linked (GlcNAc...) asparagine). Positions 344-523 (NRRIFLLNTQ…HMGMGVVFAE (180 aa)) constitute a Plastocyanin-like 3 domain. Histidine 445, histidine 448, histidine 450, histidine 506, cysteine 507, histidine 508, histidine 512, and methionine 517 together coordinate Cu cation.

The protein belongs to the multicopper oxidase family. As to quaternary structure, dimer. Requires Cu cation as cofactor.

It is found in the secreted. The enzyme catalyses 4 L-ascorbate + O2 = 4 monodehydro-L-ascorbate radical + 2 H2O. In terms of biological role, may be involved in a redox system involving ascorbic acid. The chain is L-ascorbate oxidase from Cucurbita pepo var. melopepo (Zucchini).